Consider the following 181-residue polypeptide: Mytilin-1 (181 aa).

An N-terminal signal peptide occupies residues 1-22 (MISKYCLFVIVLGTTGTALVLT).

Component of the organic matrix of calcified shell layers like nacre and prisms.

Its subcellular location is the secreted. The protein is Mytilin-1 of Mytilus galloprovincialis (Mediterranean mussel).